A 152-amino-acid polypeptide reads, in one-letter code: Large ribosomal subunit protein bL9 (152 aa).

It belongs to the bacterial ribosomal protein bL9 family.

Functionally, binds to the 23S rRNA. This chain is Large ribosomal subunit protein bL9, found in Chlorobaculum tepidum (strain ATCC 49652 / DSM 12025 / NBRC 103806 / TLS) (Chlorobium tepidum).